The sequence spans 269 residues: Thiazole synthase (269 aa).

Catalysis depends on K105, which acts as the Schiff-base intermediate with DXP. Residues G166, 192–193 (AG), and 214–215 (NT) contribute to the 1-deoxy-D-xylulose 5-phosphate site. Positions 245 to 269 (AMSAQDAAQPSTPVLGTPFWHHDHG) are disordered.

Belongs to the ThiG family. In terms of assembly, homotetramer. Forms heterodimers with either ThiH or ThiS.

The protein localises to the cytoplasm. It carries out the reaction [ThiS sulfur-carrier protein]-C-terminal-Gly-aminoethanethioate + 2-iminoacetate + 1-deoxy-D-xylulose 5-phosphate = [ThiS sulfur-carrier protein]-C-terminal Gly-Gly + 2-[(2R,5Z)-2-carboxy-4-methylthiazol-5(2H)-ylidene]ethyl phosphate + 2 H2O + H(+). The protein operates within cofactor biosynthesis; thiamine diphosphate biosynthesis. Its function is as follows. Catalyzes the rearrangement of 1-deoxy-D-xylulose 5-phosphate (DXP) to produce the thiazole phosphate moiety of thiamine. Sulfur is provided by the thiocarboxylate moiety of the carrier protein ThiS. In vitro, sulfur can be provided by H(2)S. The sequence is that of Thiazole synthase from Paracidovorax citrulli (strain AAC00-1) (Acidovorax citrulli).